A 212-amino-acid chain; its full sequence is Thymidylate kinase (212 aa).

Residue 10–17 (GIDGCGKT) participates in ATP binding.

The protein belongs to the thymidylate kinase family.

The catalysed reaction is dTMP + ATP = dTDP + ADP. Phosphorylation of dTMP to form dTDP in both de novo and salvage pathways of dTTP synthesis. The chain is Thymidylate kinase from Prochlorococcus marinus (strain AS9601).